The chain runs to 166 residues: Small ribosomal subunit protein uS5 (166 aa).

The 64-residue stretch at 12-75 (YIEKLVQVNR…EAARRNMIQV (64 aa)) folds into the S5 DRBM domain.

It belongs to the universal ribosomal protein uS5 family. In terms of assembly, part of the 30S ribosomal subunit. Contacts proteins S4 and S8.

Functionally, with S4 and S12 plays an important role in translational accuracy. Its function is as follows. Located at the back of the 30S subunit body where it stabilizes the conformation of the head with respect to the body. In Pseudomonas syringae pv. tomato (strain ATCC BAA-871 / DC3000), this protein is Small ribosomal subunit protein uS5.